The chain runs to 527 residues: Bifunctional purine biosynthesis protein PurH (527 aa).

Positions Met-1–Thr-149 constitute an MGS-like domain.

The protein belongs to the PurH family.

It carries out the reaction (6R)-10-formyltetrahydrofolate + 5-amino-1-(5-phospho-beta-D-ribosyl)imidazole-4-carboxamide = 5-formamido-1-(5-phospho-D-ribosyl)imidazole-4-carboxamide + (6S)-5,6,7,8-tetrahydrofolate. It catalyses the reaction IMP + H2O = 5-formamido-1-(5-phospho-D-ribosyl)imidazole-4-carboxamide. It participates in purine metabolism; IMP biosynthesis via de novo pathway; 5-formamido-1-(5-phospho-D-ribosyl)imidazole-4-carboxamide from 5-amino-1-(5-phospho-D-ribosyl)imidazole-4-carboxamide (10-formyl THF route): step 1/1. The protein operates within purine metabolism; IMP biosynthesis via de novo pathway; IMP from 5-formamido-1-(5-phospho-D-ribosyl)imidazole-4-carboxamide: step 1/1. This chain is Bifunctional purine biosynthesis protein PurH, found in Xanthomonas euvesicatoria pv. vesicatoria (strain 85-10) (Xanthomonas campestris pv. vesicatoria).